Reading from the N-terminus, the 233-residue chain is Tapetum-specific methyltransferase 1 (233 aa).

Lys8 is a binding site for substrate. S-adenosyl-L-methionine is bound by residues Val52, Glu74, 76 to 77 (GV), Ser82, Asp100, and Ala129. Asp150 lines the substrate pocket. Residue Asp150 participates in a divalent metal cation binding. Position 152 (Asp152) interacts with S-adenosyl-L-methionine. The a divalent metal cation site is built by Asp176 and Asn177.

The protein belongs to the class I-like SAM-binding methyltransferase superfamily. Cation-dependent O-methyltransferase family. CCoAMT subfamily. A divalent metal cation is required as a cofactor. As to expression, expressed in inflorescences and flower buds. Not detected in roots, leaves or stems. Located exclusively in the tapetum of developing stamen.

It participates in aromatic compound metabolism; phenylpropanoid biosynthesis. Methyltransferase involved in phenylpropanoid polyamine conjugate biosynthesis. In vivo, methylates only one of the 5-hydroxyferuloyl moieties of N1,N5,N10-tri-(hydroxyferuloyl)-spermidine, while is able in vitro to convert all three 5-hydroxyferuloyl residues to the corresponding sinapoyl moieties and to methylate caffeoyl CoA and tricaffeoyl spermidine. The chain is Tapetum-specific methyltransferase 1 (TSM1) from Arabidopsis thaliana (Mouse-ear cress).